Reading from the N-terminus, the 247-residue chain is TM2 domain-containing protein 3 (247 aa).

The first 29 residues, 1 to 29 (MAGGVLPLRGLRALCRVLLFLSQFCILSG), serve as a signal peptide directing secretion. The Extracellular portion of the chain corresponds to 30–179 (GEQSQALAQS…RTFPKMLYCN (150 aa)). N-linked (GlcNAc...) asparagine glycosylation is found at Asn-87, Asn-122, Asn-140, Asn-157, Asn-169, and Asn-179. The helical transmembrane segment at 180-200 (WTGGYKWSTALALSITLGGFG) threads the bilayer. The TM2 domain occupies 183 to 230 (GYKWSTALALSITLGGFGADRFYLGQWREGLGKLFSFGGLGIWTLIDV). Topologically, residues 201 to 215 (ADRFYLGQWREGLGK) are cytoplasmic. The chain crosses the membrane as a helical span at residues 216-236 (LFSFGGLGIWTLIDVLLIGVG). Residues 237–247 (YVGPADGSLYI) are Extracellular-facing.

Belongs to the TM2 family. In terms of tissue distribution, widely expressed.

It localises to the membrane. Its function is as follows. Probable positive regulator of Notch signaling. The sequence is that of TM2 domain-containing protein 3 (TM2D3) from Homo sapiens (Human).